A 1383-amino-acid polypeptide reads, in one-letter code: PAS domain-containing serine/threonine-protein kinase (1383 aa).

Position 1 is an N-acetylmethionine (methionine 1). Serine 19 is subject to Phosphoserine. Threonine 31 carries the post-translational modification Phosphothreonine. PAS domains follow at residues 117–188 (SGSL…VEAD) and 333–400 (YQAS…SVQL). A Phosphoserine modification is found at serine 1000. Residues 1059 to 1311 (YNTISPLGSG…LEKLIRDPWV (253 aa)) form the Protein kinase domain. Residues 1065–1073 (LGSGAFGFV), lysine 1088, and 1142–1149 (EKHGSGMD) contribute to the ATP site. Catalysis depends on aspartate 1188, which acts as the Proton acceptor. Aspartate 1206 serves as a coordination point for ATP. Residues threonine 1221 and threonine 1225 each carry the phosphothreonine; by autocatalysis modification. The tract at residues 1344 to 1383 (GSRSPSEMAQREGLCGPPAPRETRGDQHCLHLKDPSLPVS) is disordered. A compositionally biased stretch (basic and acidic residues) spans 1364-1377 (RETRGDQHCLHLKD).

Belongs to the protein kinase superfamily. CAMK Ser/Thr protein kinase family. Post-translationally, autophosphorylated on Thr-1221 and Thr-1225. Autophosphorylation is activated by phospholipids. As to expression, ubiquitously expressed. Strongly up-regulated in postmeiotic germ cells during spermatogenesis.

The protein localises to the cytoplasm. It is found in the nucleus. It carries out the reaction L-seryl-[protein] + ATP = O-phospho-L-seryl-[protein] + ADP + H(+). The catalysed reaction is L-threonyl-[protein] + ATP = O-phospho-L-threonyl-[protein] + ADP + H(+). Its activity is regulated as follows. Protein kinase activity is inhibited by the first PAS domain: binding of an unidentified ligand desinhibits the protein kinase activity. May be activated by autophosphorylation on Thr-1221 and Thr-1225. Autophosphorylation is enhanced upon phosphatidylinositol monophosphate (phosphatidylinositol 4-phosphate) binding and inhibited upon phosphatidylinositol bi- and tri-phosphate binding. In contrast, phosphorylation of target proteins is inhibited upon all phosphatidylinositol-binding (phosphatidylinositol mono- bi- and tri-phosphate). Its function is as follows. Serine/threonine-protein kinase involved in energy homeostasis and protein translation. Phosphorylates EEF1A1, GYS1, PDX1 and RPS6. Probably plays a role under changing environmental conditions (oxygen, glucose, nutrition), rather than under standard conditions. Acts as a sensor involved in energy homeostasis: regulates glycogen synthase synthesis by mediating phosphorylation of GYS1, leading to GYS1 inactivation. May be involved in glucose-stimulated insulin production in pancreas and regulation of glucagon secretion by glucose in alpha cells; however such data require additional evidences. May play a role in regulation of protein translation by phosphorylating EEF1A1, leading to increase translation efficiency. May also participate in respiratory regulation. In Mus musculus (Mouse), this protein is PAS domain-containing serine/threonine-protein kinase (Pask).